The following is a 119-amino-acid chain: uncharacterized protein (119 aa).

The chain crosses the membrane as a helical span at residues 74–91 (LSVHFLLNVISAILSMLI).

Its subcellular location is the membrane. This is an uncharacterized protein from Schizosaccharomyces pombe (strain 972 / ATCC 24843) (Fission yeast).